A 227-amino-acid polypeptide reads, in one-letter code: Glutathione S-transferase U18 (227 aa).

A GST N-terminal domain is found at 4–83; the sequence is EDVKLIGSWA…YIDEAWNSSG (80 aa). Glutathione-binding positions include 14–15, 40–41, 54–55, and 67–68; these read SV, SK, KM, and ES. The region spanning 90 to 221 is the GST C-terminal domain; that stretch reads HPYDRAIARF…TKLAEFARKL (132 aa).

It belongs to the GST superfamily. Tau family.

Its subcellular location is the cytoplasm. The protein localises to the cytosol. It carries out the reaction RX + glutathione = an S-substituted glutathione + a halide anion + H(+). Functionally, may be involved in the conjugation of reduced glutathione to a wide number of exogenous and endogenous hydrophobic electrophiles and have a detoxification role against certain herbicides. In Arabidopsis thaliana (Mouse-ear cress), this protein is Glutathione S-transferase U18 (GSTU18).